The sequence spans 492 residues: Catalase isozyme A (492 aa).

The segment at 1-23 is disordered; sequence MDPCKFRPSSSFDTKTTTTNAGA. The span at 8–21 shows a compositional bias: polar residues; it reads PSSSFDTKTTTTNA. Residues His65 and Asn138 contribute to the active site. Heme is bound at residue Tyr348.

Belongs to the catalase family. In terms of assembly, homotetramer. Heme serves as cofactor.

The protein resides in the peroxisome. It localises to the glyoxysome. The enzyme catalyses 2 H2O2 = O2 + 2 H2O. Functionally, occurs in almost all aerobically respiring organisms and serves to protect cells from the toxic effects of hydrogen peroxide. This Oryza sativa subsp. indica (Rice) protein is Catalase isozyme A.